The primary structure comprises 168 residues: Cyclic pyranopterin monophosphate synthase (168 aa).

Residues methionine 75 to histidine 77 and methionine 115 to glutamate 116 each bind substrate. The active site involves aspartate 130.

Belongs to the MoaC family. As to quaternary structure, homohexamer; trimer of dimers.

It catalyses the reaction (8S)-3',8-cyclo-7,8-dihydroguanosine 5'-triphosphate = cyclic pyranopterin phosphate + diphosphate. It functions in the pathway cofactor biosynthesis; molybdopterin biosynthesis. In terms of biological role, catalyzes the conversion of (8S)-3',8-cyclo-7,8-dihydroguanosine 5'-triphosphate to cyclic pyranopterin monophosphate (cPMP). This Bacillus licheniformis (strain ATCC 14580 / DSM 13 / JCM 2505 / CCUG 7422 / NBRC 12200 / NCIMB 9375 / NCTC 10341 / NRRL NRS-1264 / Gibson 46) protein is Cyclic pyranopterin monophosphate synthase.